Reading from the N-terminus, the 532-residue chain is Protein DETOXIFICATION 48 (532 aa).

The next 12 helical transmembrane spans lie at 65–85, 95–115, 136–156, 174–194, 211–231, 235–255, 279–301, 322–342, 363–383, 397–417, 437–457, and 464–484; these read ISGP…ISML, LAGG…VISG, LGLT…PISF, ISSV…LLSL, VTYS…LLVV, MGVA…VVLL, GWSA…WWWY, GILI…SLGV, IISL…AVLV, ILQL…GNCP, INLG…GFVF, and LWFG…CALL. The disordered stretch occupies residues 496–532; that stretch reads EELTSQTPGKSPPLLPIASSKSRSTSGTEDMMRTMLV. The segment covering 514-523 has biased composition (polar residues); sequence SSKSRSTSGT.

It belongs to the multi antimicrobial extrusion (MATE) (TC 2.A.66.1) family. As to expression, highly expressed in shoot apices relative to leaves. At vegetative stages, highly expressed at the stipules. At reproductive stages, most highly expressed in the mature pollen. Also expressed in the tips of sepals.

It localises to the golgi apparatus membrane. The protein localises to the late endosome membrane. Its function is as follows. Functions as a multidrug and toxin extrusion transporter. Contributes to iron homeostasis during stress responses and senescence. Could be involved in specifying the lateral organ initiation rate. May act as a negative regulator of hypocotyl cell elongation in the light. In Arabidopsis thaliana (Mouse-ear cress), this protein is Protein DETOXIFICATION 48.